Here is a 123-residue protein sequence, read N- to C-terminus: Transmembrane protein 254 (123 aa).

3 helical membrane passes run 15–35, 63–83, and 95–115; these read LFWF…VFWP, NGYW…LVLC, and LLWF…LFAY.

The protein resides in the membrane. This Rattus norvegicus (Rat) protein is Transmembrane protein 254 (Tmem254).